A 338-amino-acid polypeptide reads, in one-letter code: Phosphate acyltransferase (338 aa).

It belongs to the PlsX family. Homodimer. Probably interacts with PlsY.

Its subcellular location is the cytoplasm. It carries out the reaction a fatty acyl-[ACP] + phosphate = an acyl phosphate + holo-[ACP]. The protein operates within lipid metabolism; phospholipid metabolism. In terms of biological role, catalyzes the reversible formation of acyl-phosphate (acyl-PO(4)) from acyl-[acyl-carrier-protein] (acyl-ACP). This enzyme utilizes acyl-ACP as fatty acyl donor, but not acyl-CoA. The polypeptide is Phosphate acyltransferase (Salinibacter ruber (strain DSM 13855 / M31)).